A 782-amino-acid polypeptide reads, in one-letter code: E3 UFM1-protein ligase 1 homolog (782 aa).

Residues 405 to 478 are disordered; it reads VSTQELEDDG…TRGGGGASKK (74 aa).

It belongs to the UFL1 family.

Functionally, E3 UFM1-protein ligase that mediates ufmylation of target proteins. In Drosophila sechellia (Fruit fly), this protein is E3 UFM1-protein ligase 1 homolog.